The sequence spans 169 residues: MRDAVTSLIKNYDVAGRYFDRNAIESLKSYFESGTQRVQAAKAINANAAAIVKQTGSKLFDEQPELIRPGGNAYTTRRYAACLRDLDYYLRYATYAIVAGSMDVLDERVLQGLRETYNSLGVPIGPTVRGIQIMKEIVKEQLGAAGIPNTSFVDEPFDYMTRELGEKDI.

Asparagine 72 is subject to N4-methylasparagine. Cysteine 82 is a binding site for (2R,3E)-phycocyanobilin.

This sequence belongs to the phycobiliprotein family. In terms of assembly, heterodimer of an alpha and a beta chain. Contains one covalently linked bilin chromophore.

Its subcellular location is the cellular thylakoid membrane. Its function is as follows. Light-harvesting photosynthetic bile pigment-protein from the phycobiliprotein complex. This is a protein functionally equivalent to, but with weaker absorbance than, allophycocyanin beta chain. This chain is Phycobiliprotein beta chain (apcD), found in Mastigocladus laminosus (Fischerella sp.).